The chain runs to 116 residues: UPF0122 protein CA_C1753 (116 aa).

Belongs to the UPF0122 family.

Might take part in the signal recognition particle (SRP) pathway. This is inferred from the conservation of its genetic proximity to ftsY/ffh. May be a regulatory protein. This Clostridium acetobutylicum (strain ATCC 824 / DSM 792 / JCM 1419 / IAM 19013 / LMG 5710 / NBRC 13948 / NRRL B-527 / VKM B-1787 / 2291 / W) protein is UPF0122 protein CA_C1753.